A 553-amino-acid chain; its full sequence is Heterochromatin protein 1-binding protein 3 (553 aa).

Residue A2 is modified to N-acetylalanine. S6 carries the phosphoserine modification. The tract at residues 30-131 is disordered; it reads LGEKADDSTM…SKEKEKKVKK (102 aa). A Phosphothreonine modification is found at T51. The segment covering 60–71 has biased composition (acidic residues); that stretch reads GEEEKPEPDGSS. A Glycyl lysine isopeptide (Lys-Gly) (interchain with G-Cter in SUMO2) cross-link involves residue K64. T85 bears the Phosphothreonine mark. Over residues 91 to 127 the composition is skewed to basic and acidic residues; it reads REAEQPKGEPESGEKEESKSAEETKKEEKDQSKEKEK. Residue K97 forms a Glycyl lysine isopeptide (Lys-Gly) (interchain with G-Cter in SUMO2) linkage. S142, S155, and S156 each carry phosphoserine. In terms of domain architecture, H15 1 spans 157–232; it reads PRPKMDAILT…GASGSFVVVQ (76 aa). Position 190 is an N6-acetyllysine (K190). The interval 231 to 251 is disordered; sequence VQKSKTPQKSKNRKKGSAVDP. The segment covering 236–246 has biased composition (basic residues); it reads TPQKSKNRKKG. S247 is modified (phosphoserine). Residues 253–257 carry the PxVxL motif motif; sequence PQVKL. H15 domains are found at residues 253–328 and 335–411; these read PQVK…QLKK and LGGS…QLCF. K256 is covalently cross-linked (Glycyl lysine isopeptide (Lys-Gly) (interchain with G-Cter in SUMO2)). The tract at residues 422-553 is disordered; it reads PKKVSDGSED…MKKKSFKTKK (132 aa). The segment covering 428-449 has biased composition (acidic residues); the sequence is GSEDEDEEEDEEESSEDSEDEE. Phosphoserine occurs at positions 441, 442, and 445. Basic residues-rich tracts occupy residues 488–509 and 542–553; these read GKVR…RKGR and SAMKKKSFKTKK.

In terms of assembly, interacts (via PxVxL motif) with CBX5.

The protein localises to the nucleus. It localises to the chromosome. Functionally, component of heterochromatin that maintains heterochromatin integrity during G1/S progression and regulates the duration of G1 phase to critically influence cell proliferative capacity. May play a role in hypoxia-induced oncogenesis. The sequence is that of Heterochromatin protein 1-binding protein 3 (Hp1bp3) from Rattus norvegicus (Rat).